A 680-amino-acid polypeptide reads, in one-letter code: Zinc finger protein OBI1 (680 aa).

Positions 16–87 (VSFEDVAVDF…AEATEQCLPG (72 aa)) constitute a KRAB domain. Residues 263–280 (CHKIFPNKTELSNHDAMH) form a C2H2-type 1; degenerate zinc finger. 8 consecutive C2H2-type zinc fingers follow at residues 455–477 (FRCN…QRMH), 483–505 (HECK…QGIH), 511–533 (YECN…ERTH), 539–561 (FECK…QKIH), 567–589 (HKCK…QKTH), 595–617 (YECK…ETTH), 623–645 (YECK…QVIH), and 651–673 (FECK…QKIH).

In terms of processing, polyubiquitinated, leading to its degradation via the ubiquitin-proteasome pathway. As to expression, expressed during osteogenic differentiation where levels increase from the first days of differentiation and remain high during the whole process. Highly expressed in lung.

The protein localises to the nucleus. May modulate osteogenic differentiation, at least in part, through the bone morphogenetic protein (BMP) signaling pathway, increasing RUNX2 activation and leading to osteoblast commitment and maturation. The sequence is that of Zinc finger protein OBI1 (ObI1) from Mus musculus (Mouse).